Here is a 472-residue protein sequence, read N- to C-terminus: Citrate synthase, mitochondrial (472 aa).

Active-site residues include His308, His354, and Asp409.

The protein belongs to the citrate synthase family. In terms of assembly, homodimer.

It is found in the mitochondrion matrix. It catalyses the reaction oxaloacetate + acetyl-CoA + H2O = citrate + CoA + H(+). It participates in carbohydrate metabolism; tricarboxylic acid cycle; isocitrate from oxaloacetate: step 1/2. The chain is Citrate synthase, mitochondrial (CS) from Daucus carota (Wild carrot).